A 302-amino-acid chain; its full sequence is Sulfate adenylyltransferase subunit 2 (302 aa).

Belongs to the PAPS reductase family. CysD subfamily. Heterodimer composed of CysD, the smaller subunit, and CysN.

It catalyses the reaction sulfate + ATP + H(+) = adenosine 5'-phosphosulfate + diphosphate. The protein operates within sulfur metabolism; hydrogen sulfide biosynthesis; sulfite from sulfate: step 1/3. Its function is as follows. With CysN forms the ATP sulfurylase (ATPS) that catalyzes the adenylation of sulfate producing adenosine 5'-phosphosulfate (APS) and diphosphate, the first enzymatic step in sulfur assimilation pathway. APS synthesis involves the formation of a high-energy phosphoric-sulfuric acid anhydride bond driven by GTP hydrolysis by CysN coupled to ATP hydrolysis by CysD. This Erwinia tasmaniensis (strain DSM 17950 / CFBP 7177 / CIP 109463 / NCPPB 4357 / Et1/99) protein is Sulfate adenylyltransferase subunit 2.